Here is a 953-residue protein sequence, read N- to C-terminus: Isoleucine--tRNA ligase (953 aa).

The short motif at 57 to 67 (PYANGDIHIGH) is the 'HIGH' region element. An L-isoleucyl-5'-AMP-binding site is contributed by E582. The short motif at 623-627 (KMSKS) is the 'KMSKS' region element. K626 provides a ligand contact to ATP. Zn(2+) contacts are provided by C916, C919, C936, and C939.

This sequence belongs to the class-I aminoacyl-tRNA synthetase family. IleS type 1 subfamily. As to quaternary structure, monomer. Requires Zn(2+) as cofactor.

It is found in the cytoplasm. It catalyses the reaction tRNA(Ile) + L-isoleucine + ATP = L-isoleucyl-tRNA(Ile) + AMP + diphosphate. In terms of biological role, catalyzes the attachment of isoleucine to tRNA(Ile). As IleRS can inadvertently accommodate and process structurally similar amino acids such as valine, to avoid such errors it has two additional distinct tRNA(Ile)-dependent editing activities. One activity is designated as 'pretransfer' editing and involves the hydrolysis of activated Val-AMP. The other activity is designated 'posttransfer' editing and involves deacylation of mischarged Val-tRNA(Ile). The sequence is that of Isoleucine--tRNA ligase from Bordetella parapertussis (strain 12822 / ATCC BAA-587 / NCTC 13253).